Here is a 105-residue protein sequence, read N- to C-terminus: Small ribosomal subunit protein uS10 (105 aa).

It belongs to the universal ribosomal protein uS10 family. Part of the 30S ribosomal subunit.

Functionally, involved in the binding of tRNA to the ribosomes. This is Small ribosomal subunit protein uS10 from Rickettsia akari (strain Hartford).